The primary structure comprises 89 residues: Elongation factor 1-beta (89 aa).

The protein belongs to the EF-1-beta/EF-1-delta family.

Its function is as follows. Promotes the exchange of GDP for GTP in EF-1-alpha/GDP, thus allowing the regeneration of EF-1-alpha/GTP that could then be used to form the ternary complex EF-1-alpha/GTP/AAtRNA. This Methanococcus maripaludis (strain DSM 14266 / JCM 13030 / NBRC 101832 / S2 / LL) protein is Elongation factor 1-beta.